The chain runs to 101 residues: ATP synthase subunit c (101 aa).

Transmembrane regions (helical) follow at residues Ala31–Gln51 and Ala81–Gly101.

It belongs to the ATPase C chain family. In terms of assembly, F-type ATPases have 2 components, F(1) - the catalytic core - and F(0) - the membrane proton channel. F(1) has five subunits: alpha(3), beta(3), gamma(1), delta(1), epsilon(1). F(0) has three main subunits: a(1), b(2) and c(10-14). The alpha and beta chains form an alternating ring which encloses part of the gamma chain. F(1) is attached to F(0) by a central stalk formed by the gamma and epsilon chains, while a peripheral stalk is formed by the delta and b chains.

The protein resides in the cell membrane. Functionally, f(1)F(0) ATP synthase produces ATP from ADP in the presence of a proton or sodium gradient. F-type ATPases consist of two structural domains, F(1) containing the extramembraneous catalytic core and F(0) containing the membrane proton channel, linked together by a central stalk and a peripheral stalk. During catalysis, ATP synthesis in the catalytic domain of F(1) is coupled via a rotary mechanism of the central stalk subunits to proton translocation. In terms of biological role, key component of the F(0) channel; it plays a direct role in translocation across the membrane. A homomeric c-ring of between 10-14 subunits forms the central stalk rotor element with the F(1) delta and epsilon subunits. This is ATP synthase subunit c from Mesomycoplasma hyopneumoniae (strain 7448) (Mycoplasma hyopneumoniae).